The chain runs to 197 residues: Probable GTP-binding protein EngB (197 aa).

Positions 22 to 195 constitute an EngB-type G domain; the sequence is KRIEIAFVGR…LKVLESVIDF (174 aa). GTP is bound by residues 30–37, 57–61, 75–78, 142–145, and 174–176; these read GRSNVGKS, GKTRL, DLPG, TKVD, and FSS. 2 residues coordinate Mg(2+): S37 and T59.

The protein belongs to the TRAFAC class TrmE-Era-EngA-EngB-Septin-like GTPase superfamily. EngB GTPase family. Requires Mg(2+) as cofactor.

Necessary for normal cell division and for the maintenance of normal septation. In Clostridium kluyveri (strain ATCC 8527 / DSM 555 / NBRC 12016 / NCIMB 10680 / K1), this protein is Probable GTP-binding protein EngB.